Here is a 237-residue protein sequence, read N- to C-terminus: Ribonuclease 3 (237 aa).

The 130-residue stretch at 4–133 (LTELENSLGV…VLAAIYIDKG (130 aa)) folds into the RNase III domain. E46 contacts Mg(2+). Catalysis depends on residues D50 and E122. E122 is a Mg(2+) binding site. Residues 160–229 (DYKSRLQELI…AKVALQQFEN (70 aa)) enclose the DRBM domain.

The protein belongs to the ribonuclease III family. As to quaternary structure, homodimer. Mg(2+) serves as cofactor.

It is found in the cytoplasm. It catalyses the reaction Endonucleolytic cleavage to 5'-phosphomonoester.. Digests double-stranded RNA. Involved in the processing of primary rRNA transcript to yield the immediate precursors to the large and small rRNAs (23S and 16S). Processes some mRNAs, and tRNAs when they are encoded in the rRNA operon. Processes pre-crRNA and tracrRNA of type II CRISPR loci if present in the organism. The protein is Ribonuclease 3 of Dehalococcoides mccartyi (strain CBDB1).